The primary structure comprises 468 residues: Asparagine--tRNA ligase (468 aa).

Belongs to the class-II aminoacyl-tRNA synthetase family. As to quaternary structure, homodimer.

The protein localises to the cytoplasm. It carries out the reaction tRNA(Asn) + L-asparagine + ATP = L-asparaginyl-tRNA(Asn) + AMP + diphosphate + H(+). In Parabacteroides distasonis (strain ATCC 8503 / DSM 20701 / CIP 104284 / JCM 5825 / NCTC 11152), this protein is Asparagine--tRNA ligase.